Consider the following 562-residue polypeptide: Protein wntless (562 aa).

Topologically, residues 1–13 are cytoplasmic; the sequence is MSGTILENLSGRK. Residues 14-34 traverse the membrane as a helical segment; that stretch reads LSILVATLLLCQVLCFLLGGL. Residues 35–239 lie on the Lumenal side of the membrane; sequence YAPLPAGHVT…AIHQNGGFTQ (205 aa). An N-linked (GlcNAc...) asparagine glycan is attached at N58. The helical transmembrane segment at 240–260 threads the bilayer; it reads IWLLLKTMLFPFVVGIMIWFW. Over 261–270 the chain is Cytoplasmic; the sequence is RRVHLLQRSP. A helical membrane pass occupies residues 271-291; it reads ALLEYMLIYLGAALTFLNLPL. Topologically, residues 292–311 are lumenal; sequence EYLSLVYEMPYMLLLSDIRQ. Residues 312–332 form a helical membrane-spanning segment; it reads GIFYAMLLTFWLVFAGEHMLI. The Cytoplasmic portion of the chain corresponds to 333–344; sequence QDAPNKSTIRSR. A helical transmembrane segment spans residues 345 to 365; sequence YWKHLSAVVVGCISLFVFDIC. The Lumenal segment spans residues 366 to 390; it reads ERGVQLRNPFYSIWTTPLGAKVAMT. A helical transmembrane segment spans residues 391 to 411; that stretch reads FIVLAGVSAAIYFLFLCYMIW. Residues 412-441 lie on the Cytoplasmic side of the membrane; the sequence is KVFRNIGDKRTSLPSMSQARRLHYEGLIYR. A helical transmembrane segment spans residues 442 to 462; that stretch reads FKFLMLATLVCAALTVAGFIM. Over 463–482 the chain is Lumenal; it reads GQMAEGQWDWNDNVAIQPTS. A helical transmembrane segment spans residues 483 to 503; that stretch reads AFLTGVYGMWNIYIFALLILY. The Cytoplasmic portion of the chain corresponds to 504-562; it reads APSHKQWPAMHHSDETTQSNENIVASAASEEIEFSHLPSDSNPSEISSLTSFTRKVAFD.

It belongs to the wntless family. In terms of assembly, interacts with wg; in the Golgi. Interacts with Vps35, a component of the retromer complex; wls stability is regulated by Vps35.

Its subcellular location is the presynaptic cell membrane. It localises to the postsynaptic cell membrane. It is found in the cell membrane. The protein localises to the endoplasmic reticulum membrane. The protein resides in the endosome membrane. Its subcellular location is the golgi apparatus membrane. In terms of biological role, a segment polarity gene required for wingless (wg)-dependent patterning processes, acting in both wg-sending cells and wg-target cells. In non-neuronal cells wls directs wg secretion. The wls traffic loop encompasses the Golgi, the cell surface, an endocytic compartment and a retrograde route leading back to the Golgi, and involves clathrin-mediated endocytosis and the retromer complex (a conserved protein complex consisting of Vps35 and Vps26). In neuronal cells (the larval motorneuron NMJ), the wg signal moves across the synapse via the release of wls-containing exosome-like vesicles. Postsynaptic wls is required for the trafficking of fz2 through the fz2-interacting protein Grip. The protein is Protein wntless of Drosophila sechellia (Fruit fly).